The sequence spans 338 residues: Phytanoyl-CoA dioxygenase, peroxisomal (338 aa).

The transit peptide at 1–30 directs the protein to the peroxisome; the sequence is MEQLRAAARLQIVLGHLGRPSAGAVVAHPT. An N6-succinyllysine mark is found at Lys59 and Lys108. 2-oxoglutarate-binding positions include Lys120, Met157, 175–177, and Trp193; that span reads HQD. Residues His175 and Asp177 each coordinate Fe cation. N6-succinyllysine is present on residues Lys231 and Lys252. A Fe cation-binding site is contributed by His264. Residues Ser266 and Arg275 each coordinate 2-oxoglutarate. Residue Ser317 is modified to Phosphoserine.

This sequence belongs to the PhyH family. Interacts with FKBP52. Interacts with PHYHIP. It depends on Fe cation as a cofactor. The cofactor is L-ascorbate. Requires ATP as cofactor. Mg(2+) serves as cofactor. In terms of tissue distribution, expressed in liver, kidney, and T-cells, but not in spleen, brain, heart, lung and skeletal muscle.

The protein resides in the peroxisome. It catalyses the reaction phytanoyl-CoA + 2-oxoglutarate + O2 = 2-hydroxyphytanoyl-CoA + succinate + CO2. The enzyme catalyses 3-methylhexadecanoyl-CoA + 2-oxoglutarate + O2 = 2-hydroxy-3-methylhexadecanoyl-CoA + succinate + CO2. The catalysed reaction is hexadecanoyl-CoA + 2-oxoglutarate + O2 = 2-hydroxyhexadecanoyl-CoA + succinate + CO2. It carries out the reaction octanoyl-CoA + 2-oxoglutarate + O2 = 2-hydroxyoctanoyl-CoA + succinate + CO2. It catalyses the reaction decanoyl-CoA + 2-oxoglutarate + O2 = 2-hydroxydecanoyl-CoA + succinate + CO2. The enzyme catalyses 3-methylbutanoyl-CoA + 2-oxoglutarate + O2 = 2-hydroxy-3-methylbutanoyl-CoA + succinate + CO2. The catalysed reaction is heptadecanoyl-CoA + 2-oxoglutarate + O2 = 2-hydroxyheptadecanoyl-CoA + succinate + CO2. It carries out the reaction eicosanoyl-CoA + 2-oxoglutarate + O2 = 2-hydroxyeicosanoyl-CoA + succinate + CO2. It catalyses the reaction octadecanoyl-CoA + 2-oxoglutarate + O2 = 2-hydroxyoctadecanoyl-CoA + succinate + CO2. The enzyme catalyses dodecanoyl-CoA + 2-oxoglutarate + O2 = 2-hydroxydodecanoyl-CoA + succinate + CO2. The catalysed reaction is tetradecanoyl-CoA + 2-oxoglutarate + O2 = 2-hydroxytetradecanoyl-CoA + succinate + CO2. It carries out the reaction hexanoyl-CoA + 2-oxoglutarate + O2 = 2-hydroxyhexanoyl-CoA + succinate + CO2. It catalyses the reaction butanoyl-CoA + 2-oxoglutarate + O2 = 2-hydroxybutanoyl-CoA + succinate + CO2. The enzyme catalyses 3-methylnonanoyl-CoA + 2-oxoglutarate + O2 = 2-hydroxy-3-methylnonanoyl-CoA + succinate + CO2. The catalysed reaction is 3-methylundecanoyl-CoA + 2-oxoglutarate + O2 = 2-hydroxy-3-methylundecanoyl-CoA + succinate + CO2. It carries out the reaction 3-methyldodecanoyl-CoA + 2-oxoglutarate + O2 = 2-hydroxy-3-methyldodecanoyl-CoA + succinate + CO2. It participates in lipid metabolism; fatty acid metabolism. In terms of biological role, catalyzes the 2-hydroxylation of not only racemic phytanoyl-CoA and the isomers of 3-methylhexadecanoyl-CoA, but also a variety of other mono-branched 3-methylacyl-CoA esters (with a chain length of at least seven carbon atoms) and straight-chain acyl-CoA esters (with a chain length longer than four carbon atoms). Does not hydroxylate long and very long straight chain acyl-CoAs or 2-methyl- and 4-methyl-branched acyl-CoAs. The polypeptide is Phytanoyl-CoA dioxygenase, peroxisomal (PHYH) (Homo sapiens (Human)).